An 85-amino-acid polypeptide reads, in one-letter code: Large ribosomal subunit protein bL31B (85 aa).

It belongs to the bacterial ribosomal protein bL31 family. Type B subfamily. As to quaternary structure, part of the 50S ribosomal subunit.

This chain is Large ribosomal subunit protein bL31B, found in Serratia proteamaculans (strain 568).